Here is a 158-residue protein sequence, read N- to C-terminus: Tryptophan-rich sensory protein (158 aa).

A run of 5 helical transmembrane segments spans residues 5 to 25 (WALF…GALL), 44 to 65 (WVFP…MRVA), 73 to 93 (ALAF…VFFG), 97 to 119 (MATA…WAFF), and 124 to 144 (WAGV…GLNF).

This sequence belongs to the TspO/BZRP family. As to quaternary structure, homodimer.

The protein localises to the membrane. The protein resides in the cell inner membrane. In terms of biological role, may play a role in the transmembrane transport of tetrapyrroles and similar compounds, and thereby contribute to the regulation of tetrapyrrole biosynthesis. Binds tetrapyrroles and promotes the photooxidative degradation of protoporphyrin IX. Binds protoporphyrin IX, hemin, and coproporphyrin III, but does not bind delta-aminolevulinic acid. Can bind bilirubin, curcumin, gossypol, retinoic acid, cholesterol and the benzodiazepine receptor agonist PK-11195 (in vitro). Plays a role in the response to low oxygen levels and in the regulation of the biosynthesis of photosynthetic pigments. The polypeptide is Tryptophan-rich sensory protein (Cereibacter sphaeroides (Rhodobacter sphaeroides)).